We begin with the raw amino-acid sequence, 55 residues long: ATP synthase F(0) complex subunit 8 (55 aa).

Residues 4–24 (LNPHPWFSIFITSWLILIIIL) form a helical membrane-spanning segment.

This sequence belongs to the ATPase protein 8 family. As to quaternary structure, component of the ATP synthase complex composed at least of ATP5F1A/subunit alpha, ATP5F1B/subunit beta, ATP5MC1/subunit c (homooctomer), MT-ATP6/subunit a, MT-ATP8/subunit 8, ATP5ME/subunit e, ATP5MF/subunit f, ATP5MG/subunit g, ATP5MK/subunit k, ATP5MJ/subunit j, ATP5F1C/subunit gamma, ATP5F1D/subunit delta, ATP5F1E/subunit epsilon, ATP5PF/subunit F6, ATP5PB/subunit b, ATP5PD/subunit d, ATP5PO/subunit OSCP. ATP synthase complex consists of a soluble F(1) head domain (subunits alpha(3) and beta(3)) - the catalytic core - and a membrane F(0) domain - the membrane proton channel (subunits c, a, 8, e, f, g, k and j). These two domains are linked by a central stalk (subunits gamma, delta, and epsilon) rotating inside the F1 region and a stationary peripheral stalk (subunits F6, b, d, and OSCP).

Its subcellular location is the mitochondrion membrane. Subunit 8, of the mitochondrial membrane ATP synthase complex (F(1)F(0) ATP synthase or Complex V) that produces ATP from ADP in the presence of a proton gradient across the membrane which is generated by electron transport complexes of the respiratory chain. ATP synthase complex consist of a soluble F(1) head domain - the catalytic core - and a membrane F(1) domain - the membrane proton channel. These two domains are linked by a central stalk rotating inside the F(1) region and a stationary peripheral stalk. During catalysis, ATP synthesis in the catalytic domain of F(1) is coupled via a rotary mechanism of the central stalk subunits to proton translocation. In vivo, can only synthesize ATP although its ATP hydrolase activity can be activated artificially in vitro. Part of the complex F(0) domain. The sequence is that of ATP synthase F(0) complex subunit 8 from Pelomedusa subrufa (African side-necked turtle).